We begin with the raw amino-acid sequence, 180 residues long: UPF0340 protein RBAM_034070 (180 aa).

The protein belongs to the UPF0340 family.

The protein is UPF0340 protein RBAM_034070 of Bacillus velezensis (strain DSM 23117 / BGSC 10A6 / LMG 26770 / FZB42) (Bacillus amyloliquefaciens subsp. plantarum).